The chain runs to 326 residues: Tagatose 1,6-diphosphate aldolase (326 aa).

This sequence belongs to the aldolase LacD family.

It catalyses the reaction D-tagatofuranose 1,6-bisphosphate = D-glyceraldehyde 3-phosphate + dihydroxyacetone phosphate. It functions in the pathway carbohydrate metabolism; D-tagatose 6-phosphate degradation; D-glyceraldehyde 3-phosphate and glycerone phosphate from D-tagatose 6-phosphate: step 2/2. This Streptococcus pneumoniae serotype 4 (strain ATCC BAA-334 / TIGR4) protein is Tagatose 1,6-diphosphate aldolase.